Reading from the N-terminus, the 512-residue chain is SNF1-related protein kinase catalytic subunit alpha KIN10 (512 aa).

The region spanning 19 to 271 is the Protein kinase domain; sequence YKLGRTLGIG…IPEIRQHPWF (253 aa). K20 participates in a covalent cross-link: Glycyl lysine isopeptide (Lys-Gly) (interchain with G-Cter in ubiquitin). An ATP-binding site is contributed by 25-33; that stretch reads LGIGSFGRV. A Glycyl lysine isopeptide (Lys-Gly) (interchain with G-Cter in SUMO) cross-link involves residue K34. K48 contacts ATP. K63 is covalently cross-linked (Glycyl lysine isopeptide (Lys-Gly) (interchain with G-Cter in SUMO)). The active-site Proton acceptor is D142. Residue S164 is modified to Phosphoserine. Position 175 is a phosphothreonine; by GRIK1 or GRIK2 (T175). Residues 290–389 are auto-inhibitory domain (AID); that stretch reads AKKIDEEILQ…GLRSQYPVER (100 aa). The UBA domain maps to 292–332; that stretch reads KIDEEILQEVINMGFDRNHLIESLRNRTQNDGTVTYYLILD. Positions 294 to 512 are regulatory domain (RD); the sequence is DEEILQEVIN…AAFLAQLRVL (219 aa). S364 is modified (phosphoserine). Residue K390 forms a Glycyl lysine isopeptide (Lys-Gly) (interchain with G-Cter in SUMO) linkage. Residues 390 to 512 form a PPI region; the sequence is KWALGLQSRA…AAFLAQLRVL (123 aa). The region spanning 463-511 is the KA1 domain; the sequence is AVKSPNVVKFEIQLYKTRDDKYLLDLQRVQGPQFLFLDLCAAFLAQLRV.

This sequence belongs to the protein kinase superfamily. CAMK Ser/Thr protein kinase family. SNF1 subfamily. Subunit of a probable heterotrimeric complex consisting of an alpha catalytic (KIN10 or KIN11) subunit, and a beta (KINB) and a gamma (KING or SNF4) non-catalytic regulatory subunits. Interacts with KINB2, KINB3, SNF4 and probably with KINB1 and KING1. Interacts with SKP1/ASK1, PAD1, the N-terminus of PRL1 and the WD40 domain of 5PTase13. Potential subunit of a SCF ubiquitin ligase complex consisting of a SNF1-related protein kinase, SKP1 and CUL1. The association of the SCF complex with the proteasome may be mediated by PAD1 and seems to be inhibited by the interaction with PRL1. Interacts with ATAF1. Interacts with ESD4. Interacts with SCE1. Interacts with FUS3. Interacts with PP2C74. Interacts with CDKE1. Interacts with ABI1 and PP2CA. Interacts with KRP6. Interacts with CIPK14. Interacts with FLZ proteins through their FLZ-type zinc finger domains. Interacts with GEBP/STKR1. Interacts with MYC2. Interacts with IDD8. Interacts with BZIP63. Interacts with PTL. Interacts with FLZ3, FLZ9, TCP3, TCP13, HB21/ZHD3 and HB23/ZHD10. Interacts with PTP1. Interacts with RAPTOR1B. Forms oligomers in vitro under strongly reducing conditions. Interacts with WRI1. Interacts with EIN3. Component of a ternary complex composed of BZIP2-BZIP63 heterodimer and KIN10. Interacts with IPK2b. Interacts with FLZ6 and FLZ10. In terms of processing, phosphorylated at Thr-175 in response to glucose. Phosphorylated at Thr-175 under submergence. Autophosphorylated. Dephosphorylated at Thr-175 by ABI1 and PP2CA. Post-translationally, ubiquitinated. Degradation is mediated by a CUL4-based E3 ligase that uses PRL1 as a substrate receptor. Sumoylated by SIZ1. Sumoylated SnRK1 is ubiquitinated and degraded by the proteasome. As to expression, isoform 2 is widely expressed, especially in newly developing tissues. Isoform 2 is expressed throughout the seedling, with highest expression in leaf primordia and vascular tissue, and the seedling root tip. Isoform 2 is later expressed in developing lateral root primordia and developing embryos within siliques. Isoform 1 is widely expressed but at very low levels.

The protein localises to the plastid. It is found in the chloroplast. The protein resides in the cytoplasm. It localises to the nucleus. Its subcellular location is the golgi apparatus. The protein localises to the endoplasmic reticulum. The enzyme catalyses L-seryl-[protein] + ATP = O-phospho-L-seryl-[protein] + ADP + H(+). The catalysed reaction is L-threonyl-[protein] + ATP = O-phospho-L-threonyl-[protein] + ADP + H(+). Its activity is regulated as follows. Activated by phosphorylation at Thr-175 by GRIK1/SNAK2 and GRIK2/SNAK1. Inactivated by dephosphorylation at Thr-175. Inhibited by trehalose-6-phosphate. Down-regulated by SR45 by affecting its stability. Reduced kinase activity in response to H(2)O(2) treatment. The redox-state of Cys-177 seems to directly influence its kinase activity. Down-regulated by FLZ6 and FLZ10. Its function is as follows. Catalytic subunit of the probable trimeric SNF1-related protein kinase (SnRK) complex, a central regulator of cellular energy homeostasis, which, in response to seemingly unrelated darkness, sugar and stress conditions, activates energy-producing pathways and inhibits energy-consuming processes. May play a role in a signal transduction cascade regulating gene expression and carbohydrate metabolism in higher plants. The SnRK complex may also be involved in the regulation of fatty acid synthesis by phosphorylation of acetyl-CoA carboxylase and in assimilation of nitrogen by phosphorylating nitrate reductase. In vitro, KIN10 exhibits kinase activity on sucrose phosphate synthase and the kinase activity is inhibited by PRL1. May be a subunit of a SCF ubiquitin ligase complex and thus be involved in proteasomal ubiquitination. Phosphorylates GRIK1/SNAK2 and GRIK2/SNAK1 in vitro. Cooperates with FUS3 to regulate developmental phase transitions and lateral organ development and act both as positive regulators of abscisic acid (ABA) signaling during germination. Phosphorylates FUS3 in embryo. Negatively modulates MYC2 accumulation through its protein phosphorylation. Phosphorylates geminivirus (CaLCuV, TGMV, ToMoV) AL2 protein resulting in a delay in the viral DNA accumulation and symptom appearance during infection. Regulates bZIP63 activity to alter metabolism in response to starvation through its protein phosphorylation. Under sugar deprivation conditions, antagonizes the IDD8 function in flowering time control by its protein phosphorylation. Plays a cardinal role in the control of cell proliferation through inhibition of KRP6 activity by its protein phosphorylation. Under submergence, phosphorylates PTP1, leading to the release of the MPK6 signaling pathway inhibition. Triggers its own SUMO-mediated proteasomal degradation, establishing a negative feedback loop that attenuates SnRK1 signaling and prevents detrimental hyperactivation of stress responses. Phosphorylates RAPTOR1B in vitro. Phosphorylates and down-regulates HMGR1S in vitro. Kinase activity is redox-sensitive. Acts upstream of TOR in the regulation of autophagy. Required for the activation of autophagy by many abiotic stresses. Involved in positive regulation of autophagy, possibly by affecting the phosphorylation of ATG1 proteins. Negatively modulates WRI1 accumulation through its protein phosphorylation. Modulates leaf senescence progression by the negative regulation of EIN3 accumulation through its protein phosphorylation. Under extended darkness, C/S1-bZIP-SnRK1 complex interacts with the histone acetylation machinery to remodel chromatin and facilitate transcription. BZIP2-BZIP63-KIN10 complex binds to the ETFQO promoter to up-regulate its transcription. Phosphorylates and down-regulates IPK2b in vitro. Involved in the regulation of sucrose-induced hypocotyl elongation under light/dark cycles. This Arabidopsis thaliana (Mouse-ear cress) protein is SNF1-related protein kinase catalytic subunit alpha KIN10.